A 137-amino-acid chain; its full sequence is Putative pre-16S rRNA nuclease (137 aa).

Belongs to the YqgF nuclease family.

It is found in the cytoplasm. Functionally, could be a nuclease involved in processing of the 5'-end of pre-16S rRNA. This Anaeromyxobacter dehalogenans (strain 2CP-C) protein is Putative pre-16S rRNA nuclease.